We begin with the raw amino-acid sequence, 240 residues long: tRNA1(Val) (adenine(37)-N6)-methyltransferase (240 aa).

The protein belongs to the methyltransferase superfamily. tRNA (adenine-N(6)-)-methyltransferase family.

The protein localises to the cytoplasm. The catalysed reaction is adenosine(37) in tRNA1(Val) + S-adenosyl-L-methionine = N(6)-methyladenosine(37) in tRNA1(Val) + S-adenosyl-L-homocysteine + H(+). Functionally, specifically methylates the adenine in position 37 of tRNA(1)(Val) (anticodon cmo5UAC). This chain is tRNA1(Val) (adenine(37)-N6)-methyltransferase, found in Photobacterium profundum (strain SS9).